A 971-amino-acid chain; its full sequence is Exportin-2 (971 aa).

Met-1 bears the N-acetylmethionine mark. Residues 29 to 102 (AEKFLESVEG…KANIVHLMLS (74 aa)) enclose the Importin N-terminal domain. Ser-112 carries the post-translational modification Phosphoserine. N6-acetyllysine is present on residues Lys-574 and Lys-824. Ser-931 is subject to Phosphoserine.

This sequence belongs to the XPO2/CSE1 family. Found in a complex with CSE1L/XPO2, Ran and KPNA2. Binds with high affinity to importin-alpha only in the presence of RanGTP. The complex is dissociated by the combined action of RanBP1 and RanGAP1. Interacts with CFTR. Ubiquitous. Detected in embryos from 5 to 17 dpc. Highly expressed in adult testis, heart, brain, lung, liver, skeletal muscle, spleen and kidney.

It is found in the cytoplasm. It localises to the nucleus. In terms of biological role, export receptor for importin-alpha. Mediates importin-alpha re-export from the nucleus to the cytoplasm after import substrates (cargos) have been released into the nucleoplasm. In the nucleus binds cooperatively to importin-alpha and to the GTPase Ran in its active GTP-bound form. Docking of this trimeric complex to the nuclear pore complex (NPC) is mediated through binding to nucleoporins. Upon transit of a nuclear export complex into the cytoplasm, disassembling of the complex and hydrolysis of Ran-GTP to Ran-GDP (induced by RANBP1 and RANGAP1, respectively) cause release of the importin-alpha from the export receptor. CSE1L/XPO2 then return to the nuclear compartment and mediate another round of transport. The directionality of nuclear export is thought to be conferred by an asymmetric distribution of the GTP- and GDP-bound forms of Ran between the cytoplasm and nucleus. In Mus musculus (Mouse), this protein is Exportin-2 (Cse1l).